The sequence spans 143 residues: Putative pre-16S rRNA nuclease (143 aa).

It belongs to the YqgF nuclease family.

It is found in the cytoplasm. In terms of biological role, could be a nuclease involved in processing of the 5'-end of pre-16S rRNA. The chain is Putative pre-16S rRNA nuclease from Marinobacter nauticus (strain ATCC 700491 / DSM 11845 / VT8) (Marinobacter aquaeolei).